We begin with the raw amino-acid sequence, 750 residues long: Photosystem I P700 chlorophyll a apoprotein A1 (750 aa).

The next 8 membrane-spanning stretches (helical) occupy residues 70-93 (VFSAHFGQLAIIFIWLSGMYFHGA), 156-179 (LYSTAIGGLIFAALMLFAGWFHYH), 195-219 (LNHHLAGLLGLGSLSWAGHQVHVSL), 291-309 (TVHHHLAIAVLFLIAGHMY), 346-369 (WHAQLALNLAMLGSLTIVVAHHMY), 385-411 (LSLFTHHMWIGGFLVVGAAAHAAIFMV), 433-455 (AIVSHLNWACIFLGFHSFGLYIH), and 531-549 (FLVHHIHAFTIHVTVLILL). 2 residues coordinate [4Fe-4S] cluster: C573 and C582. 2 helical membrane passes run 589 to 610 (HVFLGLFWMYNAISVVIFHFSW) and 664 to 686 (LSAYGLPFLGAHFVWAFSLMFLF). Residue H675 participates in chlorophyll a' binding. Chlorophyll a is bound by residues M683 and Y691. W692 is a binding site for phylloquinone. A helical transmembrane segment spans residues 724–744 (AVGVAHYLLGGIATTWAFFLA).

It belongs to the PsaA/PsaB family. As to quaternary structure, the PsaA/B heterodimer binds the P700 chlorophyll special pair and subsequent electron acceptors. PSI consists of a core antenna complex that captures photons, and an electron transfer chain that converts photonic excitation into a charge separation. The eukaryotic PSI reaction center is composed of at least 11 subunits. The cofactor is P700 is a chlorophyll a/chlorophyll a' dimer, A0 is one or more chlorophyll a, A1 is one or both phylloquinones and FX is a shared 4Fe-4S iron-sulfur center..

The protein localises to the plastid. The protein resides in the chloroplast thylakoid membrane. It carries out the reaction reduced [plastocyanin] + hnu + oxidized [2Fe-2S]-[ferredoxin] = oxidized [plastocyanin] + reduced [2Fe-2S]-[ferredoxin]. Functionally, psaA and PsaB bind P700, the primary electron donor of photosystem I (PSI), as well as the electron acceptors A0, A1 and FX. PSI is a plastocyanin-ferredoxin oxidoreductase, converting photonic excitation into a charge separation, which transfers an electron from the donor P700 chlorophyll pair to the spectroscopically characterized acceptors A0, A1, FX, FA and FB in turn. Oxidized P700 is reduced on the lumenal side of the thylakoid membrane by plastocyanin. The protein is Photosystem I P700 chlorophyll a apoprotein A1 of Huperzia lucidula (Shining clubmoss).